Reading from the N-terminus, the 195-residue chain is Coiled-coil domain-containing protein 184 (195 aa).

Residues 39-68 adopt a coiled-coil conformation; sequence GMKELMEHLKAQLQALFEDVRAMRGALDEQ. The interval 98 to 175 is disordered; sequence RQGGLGVVGN…AGLLGGDGPL (78 aa). Residues 135–146 are compositionally biased toward acidic residues; the sequence is PEDEEDDDEEEK.

The polypeptide is Coiled-coil domain-containing protein 184 (CCDC184) (Bos taurus (Bovine)).